Here is a 333-residue protein sequence, read N- to C-terminus: Adenosine deaminase (333 aa).

Zn(2+)-binding residues include His12 and His14. His14, Asp16, and Gly170 together coordinate substrate. His197 contributes to the Zn(2+) binding site. Residue Glu200 is the Proton donor of the active site. Asp278 contributes to the Zn(2+) binding site. Asp279 contributes to the substrate binding site.

Belongs to the metallo-dependent hydrolases superfamily. Adenosine and AMP deaminases family. Adenosine deaminase subfamily. Zn(2+) serves as cofactor.

It carries out the reaction adenosine + H2O + H(+) = inosine + NH4(+). It catalyses the reaction 2'-deoxyadenosine + H2O + H(+) = 2'-deoxyinosine + NH4(+). Catalyzes the hydrolytic deamination of adenosine and 2-deoxyadenosine. This Salmonella schwarzengrund (strain CVM19633) protein is Adenosine deaminase.